The primary structure comprises 126 residues: S-adenosylmethionine decarboxylase proenzyme (126 aa).

The active-site Schiff-base intermediate with substrate; via pyruvic acid is the S63. S63 is modified (pyruvic acid (Ser); by autocatalysis). Residue H68 is the Proton acceptor; for processing activity of the active site. C83 functions as the Proton donor; for catalytic activity in the catalytic mechanism.

The protein belongs to the prokaryotic AdoMetDC family. Type 1 subfamily. Heterotetramer of two alpha and two beta chains arranged as a dimer of alpha/beta heterodimers. It depends on pyruvate as a cofactor. In terms of processing, is synthesized initially as an inactive proenzyme. Formation of the active enzyme involves a self-maturation process in which the active site pyruvoyl group is generated from an internal serine residue via an autocatalytic post-translational modification. Two non-identical subunits are generated from the proenzyme in this reaction, and the pyruvate is formed at the N-terminus of the alpha chain, which is derived from the carboxyl end of the proenzyme. The post-translation cleavage follows an unusual pathway, termed non-hydrolytic serinolysis, in which the side chain hydroxyl group of the serine supplies its oxygen atom to form the C-terminus of the beta chain, while the remainder of the serine residue undergoes an oxidative deamination to produce ammonia and the pyruvoyl group blocking the N-terminus of the alpha chain.

It carries out the reaction S-adenosyl-L-methionine + H(+) = S-adenosyl 3-(methylsulfanyl)propylamine + CO2. Its pathway is amine and polyamine biosynthesis; S-adenosylmethioninamine biosynthesis; S-adenosylmethioninamine from S-adenosyl-L-methionine: step 1/1. Its function is as follows. Catalyzes the decarboxylation of S-adenosylmethionine to S-adenosylmethioninamine (dcAdoMet), the propylamine donor required for the synthesis of the polyamines spermine and spermidine from the diamine putrescine. The polypeptide is S-adenosylmethionine decarboxylase proenzyme (Bacillus velezensis (strain DSM 23117 / BGSC 10A6 / LMG 26770 / FZB42) (Bacillus amyloliquefaciens subsp. plantarum)).